The chain runs to 218 residues: E3 ubiquitin-protein ligase MARCHF3 (218 aa).

An RING-CH-type zinc finger spans residues 63-123; it reads SPFNDRPMCR…ELCHFRFAVE (61 aa). Zn(2+) is bound by residues Cys71, Cys74, Cys87, Cys89, His97, Cys100, Cys113, and Cys116. 2 consecutive transmembrane segments (helical) span residues 145-165 and 180-200; these read LFGD…SGWL and LEAV…LFWT.

As to quaternary structure, interacts with MARCHF2 and STX6.

The protein localises to the cytoplasmic vesicle membrane. Its subcellular location is the early endosome membrane. It catalyses the reaction S-ubiquitinyl-[E2 ubiquitin-conjugating enzyme]-L-cysteine + [acceptor protein]-L-lysine = [E2 ubiquitin-conjugating enzyme]-L-cysteine + N(6)-ubiquitinyl-[acceptor protein]-L-lysine.. It functions in the pathway protein modification; protein ubiquitination. In terms of biological role, E3 ubiquitin-protein ligase which may be involved in endosomal trafficking. E3 ubiquitin ligases accept ubiquitin from an E2 ubiquitin-conjugating enzyme in the form of a thioester and then directly transfer the ubiquitin to targeted substrates. This Mus musculus (Mouse) protein is E3 ubiquitin-protein ligase MARCHF3 (Marchf3).